Here is a 248-residue protein sequence, read N- to C-terminus: 2,3-bisphosphoglycerate-dependent phosphoglycerate mutase (248 aa).

Residues 8-15 (RHGESTWN), 21-22 (TG), Arg60, 87-90 (ERHY), Lys98, 114-115 (RR), and 183-184 (GN) each bind substrate. The active-site Tele-phosphohistidine intermediate is His9. Catalysis depends on Glu87, which acts as the Proton donor/acceptor.

It belongs to the phosphoglycerate mutase family. BPG-dependent PGAM subfamily. In terms of assembly, homodimer.

It catalyses the reaction (2R)-2-phosphoglycerate = (2R)-3-phosphoglycerate. The protein operates within carbohydrate degradation; glycolysis; pyruvate from D-glyceraldehyde 3-phosphate: step 3/5. Catalyzes the interconversion of 2-phosphoglycerate and 3-phosphoglycerate. In Burkholderia vietnamiensis (strain G4 / LMG 22486) (Burkholderia cepacia (strain R1808)), this protein is 2,3-bisphosphoglycerate-dependent phosphoglycerate mutase.